The chain runs to 431 residues: Gamma-glutamyl phosphate reductase (431 aa).

This sequence belongs to the gamma-glutamyl phosphate reductase family.

The protein localises to the cytoplasm. The catalysed reaction is L-glutamate 5-semialdehyde + phosphate + NADP(+) = L-glutamyl 5-phosphate + NADPH + H(+). Its pathway is amino-acid biosynthesis; L-proline biosynthesis; L-glutamate 5-semialdehyde from L-glutamate: step 2/2. In terms of biological role, catalyzes the NADPH-dependent reduction of L-glutamate 5-phosphate into L-glutamate 5-semialdehyde and phosphate. The product spontaneously undergoes cyclization to form 1-pyrroline-5-carboxylate. This chain is Gamma-glutamyl phosphate reductase, found in Methylobacterium nodulans (strain LMG 21967 / CNCM I-2342 / ORS 2060).